Here is a 553-residue protein sequence, read N- to C-terminus: Putative transport protein KPK_0013 (553 aa).

The next 5 helical transmembrane spans lie at Ile4–Val24, Gly28–Asp48, Phe65–Ser85, Leu95–Phe115, and Met158–Val178. RCK C-terminal domains are found at residues Arg192–Gln276 and Ala279–Asn361. The next 6 helical transmembrane spans lie at Met371–Ile391, Ala403–Phe425, Leu437–Thr457, Leu464–Leu484, Tyr493–Ala513, and Pro532–Leu552.

The protein belongs to the AAE transporter (TC 2.A.81) family. YidE subfamily.

The protein resides in the cell membrane. This Klebsiella pneumoniae (strain 342) protein is Putative transport protein KPK_0013.